A 775-amino-acid polypeptide reads, in one-letter code: Coiled-coil domain-containing protein 33 (775 aa).

2 disordered regions span residues 1–23 (MGRQ…LDPY) and 68–87 (EANN…PTRA). Basic and acidic residues predominate over residues 7–18 (KVPEEPQDRLDT). One can recognise a C2 domain in the interval 12–141 (PQDRLDTSLD…RAFHPYHFEL (130 aa)). The span at 71-84 (NHSPQARTSVTSEP) shows a compositional bias: polar residues. Coiled-coil stretches lie at residues 414–561 (VEMN…ERKE) and 672–715 (DKFS…LQEQ). A disordered region spans residues 735-775 (RSQGSTTPRQNLKDEGYPGNIERPLQTHLTPGTRDIRHHLR).

This Rattus norvegicus (Rat) protein is Coiled-coil domain-containing protein 33 (Ccdc33).